We begin with the raw amino-acid sequence, 823 residues long: Mitochondrial intermediate peptidase 2 (823 aa).

Residues 1 to 33 constitute a mitochondrion transit peptide; the sequence is MRRLQQSLRRRSARRCPFILIPHRLLTTSYASY. The interval 532 to 553 is disordered; sequence IDGDGLPEDWDKPYGPGLEADK. His-595 serves as a coordination point for Zn(2+). The active site involves Glu-596. Residues His-599 and His-602 each contribute to the Zn(2+) site.

The protein belongs to the peptidase M3 family. Zn(2+) serves as cofactor.

The protein localises to the mitochondrion matrix. It catalyses the reaction Release of an N-terminal octapeptide as second stage of processing of some proteins imported into the mitochondrion.. Functionally, cleaves proteins, imported into the mitochondrion, to their mature size. While most mitochondrial precursor proteins are processed to the mature form in one step by mitochondrial processing peptidase (MPP), the sequential cleavage by MIP of an octapeptide after initial processing by MPP is a required step for a subgroup of nuclear-encoded precursor proteins destined for the matrix or the inner membrane. The sequence is that of Mitochondrial intermediate peptidase 2 (OCT2) from Cryptococcus neoformans var. neoformans serotype D (strain B-3501A) (Filobasidiella neoformans).